Consider the following 351-residue polypeptide: MSDTNHSTLKVSDFSFELPDELIARYPQEQRSASRLLSVKANENSIEHKHFKNIVDEINAGDLLVFNDTRVIPARLLGEKVSGGKVEVLVERLLDDHRVLAHVRANRAPKAGAELLLEGHVKITMLARHDALFELKFEHDETVLELLEQYGHMPLPPYIDRPDESSDKERYQTVYNREPGAVAAPTAGLHFDDEILQQLRDKGVNSAYVTLHVGAGTFQPVRVEDINDHVMHSEYAKVSAETCNAIKQTKASGGRVIAVGTTSVRSLESAAQASTNESIEPFFDDTNIFIYPGYEFKVVDSMITNFHLPESTLIMLVSAFVGRDLIMKAYNEAIKERYRFFSYGDAMLLQR.

It belongs to the QueA family. In terms of assembly, monomer.

The protein resides in the cytoplasm. It carries out the reaction 7-aminomethyl-7-carbaguanosine(34) in tRNA + S-adenosyl-L-methionine = epoxyqueuosine(34) in tRNA + adenine + L-methionine + 2 H(+). It participates in tRNA modification; tRNA-queuosine biosynthesis. In terms of biological role, transfers and isomerizes the ribose moiety from AdoMet to the 7-aminomethyl group of 7-deazaguanine (preQ1-tRNA) to give epoxyqueuosine (oQ-tRNA). The sequence is that of S-adenosylmethionine:tRNA ribosyltransferase-isomerase from Idiomarina loihiensis (strain ATCC BAA-735 / DSM 15497 / L2-TR).